The following is a 192-amino-acid chain: MNAIWIAVAAVSLLGLAFGAILGYASRRFAVEDDPVVEKIDEILPQSQCGQCGYPGCRPYAEAISCNGEKINRCAPGGEAVMLKIAELLNVEPQPLDGEAQELTPARMVAVIDENNCIGCTKCIQACPVDAIVGATRAMHTVMSDLCTGCNLCVDPCPTHCISLQPVAETPDSWKWDLNTIPVRIIPVEHHA.

Residues 1 to 26 (MNAIWIAVAAVSLLGLAFGAILGYAS) are hydrophobic. One can recognise a 4Fe-4S domain in the interval 32-91 (EDDPVVEKIDEILPQSQCGQCGYPGCRPYAEAISCNGEKINRCAPGGEAVMLKIAELLNV). Residues Cys49, Cys52, Cys57, Cys74, Cys117, Cys120, Cys123, Cys127, Cys147, Cys150, Cys153, and Cys157 each coordinate [4Fe-4S] cluster. 2 4Fe-4S ferredoxin-type domains span residues 108-137 (MVAVIDENNCIGCTKCIQACPVDAIVGATR) and 138-167 (AMHTVMSDLCTGCNLCVDPCPTHCISLQPV).

Belongs to the 4Fe4S bacterial-type ferredoxin family. RnfB subfamily. In terms of assembly, the complex is composed of six subunits: RsxA, RsxB, RsxC, RsxD, RsxE and RsxG. Requires [4Fe-4S] cluster as cofactor.

It is found in the cell inner membrane. Its function is as follows. Part of a membrane-bound complex that couples electron transfer with translocation of ions across the membrane. Required to maintain the reduced state of SoxR. The polypeptide is Ion-translocating oxidoreductase complex subunit B (Escherichia coli O139:H28 (strain E24377A / ETEC)).